Here is a 765-residue protein sequence, read N- to C-terminus: Transcription factor RFX3 (765 aa).

Positions 189–264 form a DNA-binding region, RFX-type winged-helix; that stretch reads HLQWLLDNYE…YHYYGIRVKP (76 aa).

It belongs to the RFX family.

The protein localises to the nucleus. Its function is as follows. Transcription factor required for ciliogenesis and islet cell differentiation during endocrine pancreas development. The chain is Transcription factor RFX3 (rfx3) from Danio rerio (Zebrafish).